Consider the following 105-residue polypeptide: Large ribosomal subunit protein uL24 (105 aa).

Belongs to the universal ribosomal protein uL24 family. As to quaternary structure, part of the 50S ribosomal subunit.

In terms of biological role, one of two assembly initiator proteins, it binds directly to the 5'-end of the 23S rRNA, where it nucleates assembly of the 50S subunit. Its function is as follows. One of the proteins that surrounds the polypeptide exit tunnel on the outside of the subunit. The protein is Large ribosomal subunit protein uL24 of Clostridium novyi (strain NT).